A 253-amino-acid polypeptide reads, in one-letter code: 5'/3'-nucleotidase SurE (253 aa).

4 residues coordinate a divalent metal cation: Asp8, Asp9, Ser39, and Asn92.

This sequence belongs to the SurE nucleotidase family. A divalent metal cation serves as cofactor.

The protein resides in the cytoplasm. It catalyses the reaction a ribonucleoside 5'-phosphate + H2O = a ribonucleoside + phosphate. It carries out the reaction a ribonucleoside 3'-phosphate + H2O = a ribonucleoside + phosphate. The enzyme catalyses [phosphate](n) + H2O = [phosphate](n-1) + phosphate + H(+). Nucleotidase with a broad substrate specificity as it can dephosphorylate various ribo- and deoxyribonucleoside 5'-monophosphates and ribonucleoside 3'-monophosphates with highest affinity to 3'-AMP. Also hydrolyzes polyphosphate (exopolyphosphatase activity) with the preference for short-chain-length substrates (P20-25). Might be involved in the regulation of dNTP and NTP pools, and in the turnover of 3'-mononucleotides produced by numerous intracellular RNases (T1, T2, and F) during the degradation of various RNAs. The protein is 5'/3'-nucleotidase SurE of Escherichia fergusonii (strain ATCC 35469 / DSM 13698 / CCUG 18766 / IAM 14443 / JCM 21226 / LMG 7866 / NBRC 102419 / NCTC 12128 / CDC 0568-73).